The primary structure comprises 1040 residues: Desmoglein-4 (1040 aa).

The first 23 residues, 1–23 (MDWLLFRNICLLILFMVVLGVNS), serve as a signal peptide directing secretion. Residues 24–49 (EFIVEVKELDIENGTTTWQTVRRQKR) constitute a propeptide that is removed on maturation. Cadherin domains lie at 50–157 (EWIK…PPVF), 158–269 (TQNV…FPIL), 270–385 (EKTS…GPTF), and 389–497 (SMTF…CPVI). Residues 50-633 (EWIKFAAACR…RQSNVGLGPA (584 aa)) are Extracellular-facing. Asn-110 carries an N-linked (GlcNAc...) asparagine glycan. N-linked (GlcNAc...) asparagine glycosylation is present at Asn-545. The chain crosses the membrane as a helical span at residues 634-654 (GIGMIILGLLLLFLSPLLLLM). Over 655–1040 (CCCKRRQPEG…RYSNIHYSRQ (386 aa)) the chain is Cytoplasmic. 2 Desmoglein repeat repeats span residues 883–909 (TLSE…IVTE) and 910–940 (TYTA…ETVM). The segment at 1015–1040 (QTTRSTSPMTSQHRVTRYSNIHYSRQ) is disordered.

In terms of assembly, interacts with JUP.

The protein resides in the cell membrane. It is found in the cell junction. Its subcellular location is the desmosome. A component of desmosome cell-cell junctions which are required for positive regulation of cellular adhesion. Coordinates the transition from proliferation to differentiation in hair follicle keratinocytes. Plays a role in moderating lymphocyte migration to inflamed skin and maintaining homeostasis of the epidermal inflammatory response. In Rattus norvegicus (Rat), this protein is Desmoglein-4 (Dsg4).